The chain runs to 52 residues: Conotoxin-like peptide 2 (52 aa).

Residues 1-18 (MKFSTILLLVCPTVALSA) form the signal peptide. Intrachain disulfides connect Cys-24/Cys-38, Cys-31/Cys-42, and Cys-37/Cys-49.

It localises to the secreted. The chain is Conotoxin-like peptide 2 (CTL-2) from Orgyia pseudotsugata (Douglas-fir tussock moth).